Reading from the N-terminus, the 394-residue chain is MLLEAPVYKEIFGAVKIYELQKVIKLDTETEDVPVYTITNIPREKIYDTLGKMAVIVPMKNEKLHLVDGVLKAIPHKCPIIIVSNSKREGPNRYRLEVDLVRHFYNLTNSKIIMVHQRDPGLAKAFQKVGYTDILDEKGNIRSGKGEGMLIGILLAKAIGAEYVGFVDADNYIPGAVNEYVKDYAAGFLMSESDYTMVRLHWRHKPKVTKGTLYFKKWGRVSEITNHYLNMLISEQTSFETTIMVTGNAGEHAMTMKLAEIMPFSTNYSIEPYEIVYLLERFGKWENVEEFKDVFDQGIEIFQIETLNPHFHEDKGQEHVREMILLSLATIYHSKMASKNLKRRILNDLIEHGILKEGEEPPKLRIMRPINEIDIEEWMKVVENNSETLLRFGL.

Belongs to the glycosyltransferase 2 family.

The protein localises to the cytoplasm. It carries out the reaction (2R)-3-phosphoglycerate + GDP-alpha-D-mannose = 2-O-(alpha-D-mannosyl)-3-phosphoglycerate + GDP + H(+). Its pathway is carbohydrate biosynthesis; 2-(alpha-D-mannosyl)-D-glycerate biosynthesis; 2-(alpha-D-mannosyl)-D-glycerate from GDP-alpha-D-mannose (MPG route): step 1/2. Functionally, transfers a mannosyl group from GDP-mannose to phosphoglycerate to form mannosyl-3-phosphoglycerate (MPG). This Pyrococcus furiosus (strain ATCC 43587 / DSM 3638 / JCM 8422 / Vc1) protein is Mannosyl-3-phosphoglycerate synthase (mngA).